A 102-amino-acid polypeptide reads, in one-letter code: Small ribosomal subunit protein uS10 (102 aa).

The disordered stretch occupies residues 33–59 (RMSGPIPLPTKRIRITTRKSPDGEGSA).

This sequence belongs to the universal ribosomal protein uS10 family. As to quaternary structure, part of the 30S ribosomal subunit.

In terms of biological role, involved in the binding of tRNA to the ribosomes. The chain is Small ribosomal subunit protein uS10 from Pyrococcus furiosus (strain ATCC 43587 / DSM 3638 / JCM 8422 / Vc1).